Reading from the N-terminus, the 407-residue chain is 1-deoxy-D-xylulose 5-phosphate reductoisomerase (407 aa).

Residues Thr25, Gly26, Ser27, Ile28, Asn53, and Asn136 each coordinate NADPH. Lys137 contacts 1-deoxy-D-xylulose 5-phosphate. Glu138 serves as a coordination point for NADPH. Asp162 serves as a coordination point for Mn(2+). Residues Ser163, Glu164, Ser188, and His211 each contribute to the 1-deoxy-D-xylulose 5-phosphate site. Glu164 contributes to the Mn(2+) binding site. Gly217 contacts NADPH. Residues Ser224, Asn229, Lys230, and Glu233 each contribute to the 1-deoxy-D-xylulose 5-phosphate site. Mn(2+) is bound at residue Glu233.

It belongs to the DXR family. The cofactor is Mg(2+). Mn(2+) is required as a cofactor.

The enzyme catalyses 2-C-methyl-D-erythritol 4-phosphate + NADP(+) = 1-deoxy-D-xylulose 5-phosphate + NADPH + H(+). It functions in the pathway isoprenoid biosynthesis; isopentenyl diphosphate biosynthesis via DXP pathway; isopentenyl diphosphate from 1-deoxy-D-xylulose 5-phosphate: step 1/6. Catalyzes the NADPH-dependent rearrangement and reduction of 1-deoxy-D-xylulose-5-phosphate (DXP) to 2-C-methyl-D-erythritol 4-phosphate (MEP). The protein is 1-deoxy-D-xylulose 5-phosphate reductoisomerase of Afipia carboxidovorans (strain ATCC 49405 / DSM 1227 / KCTC 32145 / OM5) (Oligotropha carboxidovorans).